The sequence spans 128 residues: Phosphoribosyl-AMP cyclohydrolase (128 aa).

Residue D94 coordinates Mg(2+). C95 is a Zn(2+) binding site. Positions 96 and 98 each coordinate Mg(2+). Zn(2+)-binding residues include C111 and C118.

It belongs to the PRA-CH family. Homodimer. The cofactor is Mg(2+). Requires Zn(2+) as cofactor.

The protein resides in the cytoplasm. The enzyme catalyses 1-(5-phospho-beta-D-ribosyl)-5'-AMP + H2O = 1-(5-phospho-beta-D-ribosyl)-5-[(5-phospho-beta-D-ribosylamino)methylideneamino]imidazole-4-carboxamide. The protein operates within amino-acid biosynthesis; L-histidine biosynthesis; L-histidine from 5-phospho-alpha-D-ribose 1-diphosphate: step 3/9. Functionally, catalyzes the hydrolysis of the adenine ring of phosphoribosyl-AMP. The sequence is that of Phosphoribosyl-AMP cyclohydrolase from Streptomyces coelicolor (strain ATCC BAA-471 / A3(2) / M145).